A 196-amino-acid chain; its full sequence is Probable signal peptidase I-1 (196 aa).

Residues 1–16 (MQNSPIPSPWQFIKEN) lie on the Cytoplasmic side of the membrane. Residues 17 to 35 (IPLLMVALVLALLLRFFVA) traverse the membrane as a helical segment. The Periplasmic portion of the chain corresponds to 36 to 196 (EPRYIPSDSM…FVPARTIINT (161 aa)). Residues Ser44 and Lys94 contribute to the active site.

The protein belongs to the peptidase S26 family.

It is found in the cell membrane. The catalysed reaction is Cleavage of hydrophobic, N-terminal signal or leader sequences from secreted and periplasmic proteins.. This is Probable signal peptidase I-1 (lepB1) from Synechocystis sp. (strain ATCC 27184 / PCC 6803 / Kazusa).